The chain runs to 306 residues: Protein pxr1 (306 aa).

Over residues 1–11 the composition is skewed to basic residues; sequence MGLAAPRKRTK. Disordered regions lie at residues 1 to 27 and 148 to 241; these read MGLA…STSG and AQKE…SDIP. Positions 15-27 are enriched in polar residues; sequence DPNNTNWSRSTSG. The 55-residue stretch at 25–79 folds into the G-patch domain; sequence TSGYGHKIMSSQGWTPGSFLGARNAAHADMFTAASASHIRVVVKDDTLGLGARSK. Residues 182 to 191 are compositionally biased toward basic and acidic residues; sequence NTLKALREEQ. Over residues 219–228 the composition is skewed to basic residues; it reads KKERKTKKRK.

Belongs to the PINX1 family.

It is found in the nucleus. Its subcellular location is the nucleolus. In terms of biological role, involved in rRNA-processing at A0, A1 and A2 sites and negatively regulates telomerase. This is Protein pxr1 (pxr1) from Aspergillus oryzae (strain ATCC 42149 / RIB 40) (Yellow koji mold).